The sequence spans 214 residues: Cytochrome c biogenesis ATP-binding export protein CcmA (214 aa).

The region spanning 12-214 (LAAHALAFSR…TRMLTLEAAA (203 aa)) is the ABC transporter domain. Residue 44–51 (GDNGAGKT) coordinates ATP.

Belongs to the ABC transporter superfamily. CcmA exporter (TC 3.A.1.107) family. In terms of assembly, the complex is composed of two ATP-binding proteins (CcmA) and two transmembrane proteins (CcmB).

It localises to the cell inner membrane. It catalyses the reaction heme b(in) + ATP + H2O = heme b(out) + ADP + phosphate + H(+). Functionally, part of the ABC transporter complex CcmAB involved in the biogenesis of c-type cytochromes; once thought to export heme, this seems not to be the case, but its exact role is uncertain. Responsible for energy coupling to the transport system. This chain is Cytochrome c biogenesis ATP-binding export protein CcmA, found in Xanthomonas oryzae pv. oryzae (strain MAFF 311018).